Consider the following 352-residue polypeptide: Coproporphyrin III ferrochelatase (352 aa).

Fe-coproporphyrin III-binding residues include S52 and Y121. Residues H178 and E267 each contribute to the Fe(2+) site.

Belongs to the ferrochelatase family.

It is found in the cytoplasm. The enzyme catalyses Fe-coproporphyrin III + 2 H(+) = coproporphyrin III + Fe(2+). It participates in porphyrin-containing compound metabolism; protoheme biosynthesis. Functionally, involved in coproporphyrin-dependent heme b biosynthesis. Catalyzes the insertion of ferrous iron into coproporphyrin III to form Fe-coproporphyrin III. In Propionibacterium freudenreichii subsp. freudenreichii, this protein is Coproporphyrin III ferrochelatase.